Reading from the N-terminus, the 389-residue chain is Packaging protein 3 (389 aa).

The tract at residues 1–131 is interaction with packaging protein 1; the sequence is MHPVLRQMKP…VKAEVNFQTT (131 aa). The disordered stretch occupies residues 350 to 389; it reads EKENPDGSVSFQQHERGTQSHENGGHAEPAYSRRQLGRFY. The segment covering 362–374 has biased composition (basic and acidic residues); it reads QHERGTQSHENGG.

Belongs to the adenoviridae packaging protein 3 family. In terms of assembly, part of the genome packaging complex composed of packaging proteins 1, 2 and 3; this complex specifically binds to the packaging sequence on the left end of viral genomic DNA and performs packaging of the viral genome. Interacts with hexon-linking protein IIIa; this interaction is required to promote correct genome packaging. In terms of processing, cleaved at different sites by the viral protease during virion maturation.

Its subcellular location is the host nucleus. Functionally, involved in viral genome packaging through its interaction with packaging proteins 1 and 2. After proteolytic cleavage by adenovirus protease, L1 52/55k protein is removed from the capsid during viral maturation. This Canine adenovirus serotype 1 (strain CLL) (CAdV-1) protein is Packaging protein 3.